A 153-amino-acid polypeptide reads, in one-letter code: Conglutin delta 2 (153 aa).

The N-terminal stretch at 1 to 22 (MAKLTILIALVAALVLVVHTSA) is a signal peptide. 4 cysteine pairs are disulfide-bonded: cysteine 30-cysteine 102, cysteine 42-cysteine 90, cysteine 91-cysteine 138, and cysteine 104-cysteine 146.

This sequence belongs to the 2S seed storage albumins family. Heterodimer of a small chain and a large chain; disulfide-linked. Expressed in developing cotyledons (at protein level).

It is found in the endoplasmic reticulum. The sequence is that of Conglutin delta 2 from Lupinus angustifolius (Narrow-leaved blue lupine).